The sequence spans 219 residues: Pyridoxine/pyridoxamine 5'-phosphate oxidase (219 aa).

Positions 1 to 23 are disordered; the sequence is MTSSVIPPSPSAADYAAEGDRPL. FMN-binding positions include 66-71, 81-82, lysine 88, and glutamine 110; these read RIVLLK and FT. Lysine 71 contributes to the substrate binding site. The substrate site is built by tyrosine 128, arginine 132, and serine 136. FMN is bound by residues 145–146 and tryptophan 191; that span reads QS. Substrate is bound at residue 197-199; the sequence is RMH. Arginine 201 is a binding site for FMN.

The protein belongs to the pyridoxamine 5'-phosphate oxidase family. As to quaternary structure, homodimer. FMN is required as a cofactor.

The catalysed reaction is pyridoxamine 5'-phosphate + O2 + H2O = pyridoxal 5'-phosphate + H2O2 + NH4(+). It catalyses the reaction pyridoxine 5'-phosphate + O2 = pyridoxal 5'-phosphate + H2O2. Its pathway is cofactor metabolism; pyridoxal 5'-phosphate salvage; pyridoxal 5'-phosphate from pyridoxamine 5'-phosphate: step 1/1. It participates in cofactor metabolism; pyridoxal 5'-phosphate salvage; pyridoxal 5'-phosphate from pyridoxine 5'-phosphate: step 1/1. Its function is as follows. Catalyzes the oxidation of either pyridoxine 5'-phosphate (PNP) or pyridoxamine 5'-phosphate (PMP) into pyridoxal 5'-phosphate (PLP). This is Pyridoxine/pyridoxamine 5'-phosphate oxidase from Hyphomonas neptunium (strain ATCC 15444).